Reading from the N-terminus, the 141-residue chain is Large ribosomal subunit protein uL11 (141 aa).

Belongs to the universal ribosomal protein uL11 family. Part of the ribosomal stalk of the 50S ribosomal subunit. Interacts with L10 and the large rRNA to form the base of the stalk. L10 forms an elongated spine to which L12 dimers bind in a sequential fashion forming a multimeric L10(L12)X complex. Post-translationally, one or more lysine residues are methylated.

Functionally, forms part of the ribosomal stalk which helps the ribosome interact with GTP-bound translation factors. This is Large ribosomal subunit protein uL11 from Streptococcus gordonii (strain Challis / ATCC 35105 / BCRC 15272 / CH1 / DL1 / V288).